Here is a 252-residue protein sequence, read N- to C-terminus: Cell division protein ZapD (252 aa).

The protein belongs to the ZapD family. As to quaternary structure, interacts with FtsZ.

The protein localises to the cytoplasm. Its function is as follows. Cell division factor that enhances FtsZ-ring assembly. Directly interacts with FtsZ and promotes bundling of FtsZ protofilaments, with a reduction in FtsZ GTPase activity. This chain is Cell division protein ZapD, found in Cupriavidus metallidurans (strain ATCC 43123 / DSM 2839 / NBRC 102507 / CH34) (Ralstonia metallidurans).